We begin with the raw amino-acid sequence, 142 residues long: Galactose-6-phosphate isomerase subunit LacA (142 aa).

Belongs to the LacAB/RpiB family. Heteromultimeric protein consisting of LacA and LacB.

It catalyses the reaction aldehydo-D-galactose 6-phosphate = keto-D-tagatose 6-phosphate. It participates in carbohydrate metabolism; D-galactose 6-phosphate degradation; D-tagatose 6-phosphate from D-galactose 6-phosphate: step 1/1. The chain is Galactose-6-phosphate isomerase subunit LacA from Staphylococcus aureus (strain JH9).